Consider the following 352-residue polypeptide: Holliday junction branch migration complex subunit RuvB (352 aa).

Residues 13-201 (LPLRKKELRL…FGISQKIEFY (189 aa)) are large ATPase domain (RuvB-L). ATP contacts are provided by residues R41, G82, K85, T86, T87, 148-150 (EDF), R191, Y201, and R238. Position 86 (T86) interacts with Mg(2+). The segment at 202–273 (NYDELKQILL…LIKKALNSYQ (72 aa)) is small ATPAse domain (RuvB-S). The interval 276–352 (DKGLDSLDRH…KYIDSKNDDF (77 aa)) is head domain (RuvB-H). DNA-binding residues include R330 and R335.

It belongs to the RuvB family. Homohexamer. Forms an RuvA(8)-RuvB(12)-Holliday junction (HJ) complex. HJ DNA is sandwiched between 2 RuvA tetramers; dsDNA enters through RuvA and exits via RuvB. An RuvB hexamer assembles on each DNA strand where it exits the tetramer. Each RuvB hexamer is contacted by two RuvA subunits (via domain III) on 2 adjacent RuvB subunits; this complex drives branch migration. In the full resolvosome a probable DNA-RuvA(4)-RuvB(12)-RuvC(2) complex forms which resolves the HJ.

It is found in the cytoplasm. The enzyme catalyses ATP + H2O = ADP + phosphate + H(+). In terms of biological role, the RuvA-RuvB-RuvC complex processes Holliday junction (HJ) DNA during genetic recombination and DNA repair, while the RuvA-RuvB complex plays an important role in the rescue of blocked DNA replication forks via replication fork reversal (RFR). RuvA specifically binds to HJ cruciform DNA, conferring on it an open structure. The RuvB hexamer acts as an ATP-dependent pump, pulling dsDNA into and through the RuvAB complex. RuvB forms 2 homohexamers on either side of HJ DNA bound by 1 or 2 RuvA tetramers; 4 subunits per hexamer contact DNA at a time. Coordinated motions by a converter formed by DNA-disengaged RuvB subunits stimulates ATP hydrolysis and nucleotide exchange. Immobilization of the converter enables RuvB to convert the ATP-contained energy into a lever motion, pulling 2 nucleotides of DNA out of the RuvA tetramer per ATP hydrolyzed, thus driving DNA branch migration. The RuvB motors rotate together with the DNA substrate, which together with the progressing nucleotide cycle form the mechanistic basis for DNA recombination by continuous HJ branch migration. Branch migration allows RuvC to scan DNA until it finds its consensus sequence, where it cleaves and resolves cruciform DNA. The protein is Holliday junction branch migration complex subunit RuvB of Prochlorococcus marinus (strain MIT 9301).